Consider the following 396-residue polypeptide: Mannonate dehydratase (396 aa).

Belongs to the mannonate dehydratase family. It depends on Fe(2+) as a cofactor. The cofactor is Mn(2+).

The catalysed reaction is D-mannonate = 2-dehydro-3-deoxy-D-gluconate + H2O. It participates in carbohydrate metabolism; pentose and glucuronate interconversion. Functionally, catalyzes the dehydration of D-mannonate. This Enterobacter sp. (strain 638) protein is Mannonate dehydratase.